Here is a 210-residue protein sequence, read N- to C-terminus: Thiamine-phosphate synthase (210 aa).

4-amino-2-methyl-5-(diphosphooxymethyl)pyrimidine contacts are provided by residues 36 to 40 and asparagine 68; that span reads QLRIK. Aspartate 69 and aspartate 88 together coordinate Mg(2+). Residue serine 107 participates in 4-amino-2-methyl-5-(diphosphooxymethyl)pyrimidine binding. Residue 133–135 coordinates 2-[(2R,5Z)-2-carboxy-4-methylthiazol-5(2H)-ylidene]ethyl phosphate; that stretch reads TQT. Lysine 136 lines the 4-amino-2-methyl-5-(diphosphooxymethyl)pyrimidine pocket. 2-[(2R,5Z)-2-carboxy-4-methylthiazol-5(2H)-ylidene]ethyl phosphate-binding positions include glycine 165 and 185–186; that span reads VS.

The protein belongs to the thiamine-phosphate synthase family. It depends on Mg(2+) as a cofactor.

It catalyses the reaction 2-[(2R,5Z)-2-carboxy-4-methylthiazol-5(2H)-ylidene]ethyl phosphate + 4-amino-2-methyl-5-(diphosphooxymethyl)pyrimidine + 2 H(+) = thiamine phosphate + CO2 + diphosphate. The catalysed reaction is 2-(2-carboxy-4-methylthiazol-5-yl)ethyl phosphate + 4-amino-2-methyl-5-(diphosphooxymethyl)pyrimidine + 2 H(+) = thiamine phosphate + CO2 + diphosphate. It carries out the reaction 4-methyl-5-(2-phosphooxyethyl)-thiazole + 4-amino-2-methyl-5-(diphosphooxymethyl)pyrimidine + H(+) = thiamine phosphate + diphosphate. It participates in cofactor biosynthesis; thiamine diphosphate biosynthesis; thiamine phosphate from 4-amino-2-methyl-5-diphosphomethylpyrimidine and 4-methyl-5-(2-phosphoethyl)-thiazole: step 1/1. In terms of biological role, condenses 4-methyl-5-(beta-hydroxyethyl)thiazole monophosphate (THZ-P) and 2-methyl-4-amino-5-hydroxymethyl pyrimidine pyrophosphate (HMP-PP) to form thiamine monophosphate (TMP). In Cronobacter sakazakii (strain ATCC BAA-894) (Enterobacter sakazakii), this protein is Thiamine-phosphate synthase.